The following is a 662-amino-acid chain: DNA topoisomerase 4 subunit B (662 aa).

ATP is bound by residues Tyr-20, Asn-60, Asp-87, 129 to 135 (GLHGVGI), and Lys-359. In terms of domain architecture, Toprim spans 439–553 (TELFIVEGDS…EGHLYLAKPP (115 aa)). Mg(2+) contacts are provided by Glu-445, Asp-518, and Asp-520.

Belongs to the type II topoisomerase family. ParE type 1 subfamily. Heterotetramer composed of ParC and ParE. The cofactor is Mg(2+). Mn(2+) is required as a cofactor. Requires Ca(2+) as cofactor.

It carries out the reaction ATP-dependent breakage, passage and rejoining of double-stranded DNA.. Topoisomerase IV is essential for chromosome segregation. It relaxes supercoiled DNA. Performs the decatenation events required during the replication of a circular DNA molecule. In Rickettsia prowazekii (strain Madrid E), this protein is DNA topoisomerase 4 subunit B.